A 443-amino-acid chain; its full sequence is Phosphoglucosamine mutase (443 aa).

Catalysis depends on Ser-102, which acts as the Phosphoserine intermediate. Ser-102, Asp-241, Asp-243, and Asp-245 together coordinate Mg(2+). Ser-102 bears the Phosphoserine mark.

The protein belongs to the phosphohexose mutase family. Mg(2+) is required as a cofactor. Post-translationally, activated by phosphorylation.

It catalyses the reaction alpha-D-glucosamine 1-phosphate = D-glucosamine 6-phosphate. Functionally, catalyzes the conversion of glucosamine-6-phosphate to glucosamine-1-phosphate. This chain is Phosphoglucosamine mutase, found in Polaromonas naphthalenivorans (strain CJ2).